We begin with the raw amino-acid sequence, 440 residues long: Protein CapE (440 aa).

A run of 12 helical transmembrane segments spans residues 7 to 27 (VILI…IGYL), 31 to 51 (IGFR…VYLL), 60 to 80 (LVYL…NIFL), 102 to 122 (FSIA…ISVF), 141 to 161 (FYYT…FYII), 179 to 199 (ELPM…FAFS), 204 to 224 (THIK…LITG), 249 to 269 (WWMI…IKVF), 324 to 344 (IFSY…GYGF), 360 to 380 (YYNG…LLLW), 382 to 402 (FTNF…SVLI), and 409 to 429 (FSFV…LLFI).

The protein resides in the cell membrane. It participates in capsule biogenesis; capsule polysaccharide biosynthesis. Functionally, required for the biosynthesis of type 1 capsular polysaccharide. The sequence is that of Protein CapE (capE) from Staphylococcus aureus.